Reading from the N-terminus, the 344-residue chain is Sorting nexin-16 (344 aa).

The segment covering 1–10 (MATPYVPVPM) has biased composition (pro residues). 2 disordered regions span residues 1-66 (MATP…NTSS) and 81-107 (ASSI…EDRP). A compositionally biased stretch (polar residues) spans 14–26 (NSASSFTTNRNQR). The segment covering 27–40 (SSSFGSVSTSSNSS) has biased composition (low complexity). Polar residues predominate over residues 41-66 (KGQLEDSNMGNFKQTSVPDQMDNTSS). Positions 105–218 (DRPSTPTILG…EFLCLDDPPG (114 aa)) constitute a PX domain. Positions 144, 146, and 184 each coordinate a 1,2-diacyl-sn-glycero-3-phospho-(1D-myo-inositol-3-phosphate). A Phosphoserine modification is found at Ser222. The stretch at 223–278 (LEESRAFCETLEETNYRLQKELLEKQKEMESLKKLLSEKQLHIDTLENRIRTLSLE) forms a coiled coil.

Belongs to the sorting nexin family. Homooligomer. Interacts with EGFR. Detected in placenta, lung, liver,heart and pancreas.

It is found in the early endosome membrane. Its subcellular location is the late endosome membrane. It localises to the cytoplasm. The protein localises to the lysosome. Its function is as follows. May be involved in several stages of intracellular trafficking. Plays a role in protein transport from early to late endosomes. Plays a role in protein transport to the lysosome. Promotes degradation of EGFR after EGF signaling. Plays a role in intracellular transport of vesicular stomatitis virus nucleocapsids from the endosome to the cytoplasm. In Homo sapiens (Human), this protein is Sorting nexin-16 (SNX16).